A 72-amino-acid chain; its full sequence is Potassium channel toxin kappa-KTx 5.1 (72 aa).

Residues Met-1–Cys-23 form the signal peptide. Residues Asp-24–Val-43 constitute a propeptide that is removed on maturation. 2 disulfide bridges follow: Cys-47–Cys-64 and Cys-51–Cys-60. His-70 bears the Histidine amide mark.

This sequence belongs to the short scorpion toxin superfamily. Potassium channel inhibitor kappa-KTx family. Kappa-KTx 5 subfamily. In terms of tissue distribution, expressed by the venom gland.

The protein localises to the secreted. In terms of biological role, weak blocker of potassium channels Kv1.1/KCNA1 (IC(50)=578.5 nM-9.9 uM) and Kv1.6/KCNA6 (~60% block at 30 uM of toxin). Acts by binding to the pore and occluding it. Has a voltage-dependent mode of action, which can be explained by a high content of basic residues causing repulsions at higher membrane voltages. Shows a weak interaction with muscle-type nicotinic acetylcholine receptors (nAChR), since it inhibits alpha-bungarotoxin binding to muscle-type nAChR from T.californica (IC(50)=1.4 uM). This suggests it probably weakly inhibits muscle nAChR. The mode of binding to potassium channels of this toxin differs from its homologs (including HefuTx1), since it lacks the key aromatic residue of the functional dyad. In contrast, its functionally important site is composed of a number of basic residues. In Heterometrus laoticus (Thai giant scorpion), this protein is Potassium channel toxin kappa-KTx 5.1.